The sequence spans 186 residues: UPF0397 protein SGO_0469 (186 aa).

The next 5 membrane-spanning stretches (helical) occupy residues 14-34, 50-70, 77-97, 119-139, and 152-172; these read VVAT…SIPT, LFGV…GHAL, GNPW…VGLL, AQFV…DILI, and VVAT…LLIA.

It belongs to the UPF0397 family.

The protein localises to the cell membrane. In Streptococcus gordonii (strain Challis / ATCC 35105 / BCRC 15272 / CH1 / DL1 / V288), this protein is UPF0397 protein SGO_0469.